The following is a 313-amino-acid chain: D-apiose import binding protein (313 aa).

The N-terminal stretch at 1-26 (MKLTRRLTLAAFASALALGTAMPAFA) is a signal peptide. D-apiofuranose is bound by residues Asn39, 115–116 (DR), 162–164 (DTN), Arg168, Asn218, Asp243, and Gln263.

Belongs to the bacterial solute-binding protein 2 family.

It localises to the periplasm. Functionally, part of an ABC transporter complex involved in D-apiose import. Binds D-apiose, D-ribose and D-ribulose. This Rhizobium etli (strain ATCC 51251 / DSM 11541 / JCM 21823 / NBRC 15573 / CFN 42) protein is D-apiose import binding protein.